The primary structure comprises 348 residues: Endoplasmic reticulum junction formation protein lunapark-A (348 aa).

At 1-43 (MSVFCLQAKPTTVEILEGIDKDIQILEDYSVKYQRQMKAVVGR) the chain is on the cytoplasmic side. A helical transmembrane segment spans residues 44 to 64 (LLLYSILLYLMAGVVVYSWYL). Residues 65 to 67 (PEQ) lie on the Lumenal side of the membrane. A helical membrane pass occupies residues 68–88 (LMGRLVLGLPFLLFPLLVWIL). Residues 89-348 (RKVLILFFAR…EEDKQSDSGD (260 aa)) lie on the Cytoplasmic side of the membrane. Positions 105 to 126 (FKLEDLKAQKRKILEDVMETET) form a coiled coil. The interval 142-211 (KKKTDFDSTP…HSAPGGPPER (70 aa)) is disordered. Residues 277–302 (CQQCLSHNGMALKEEFEYVAFRCAYC) form a C4-type; plays a role in ER morphology zinc finger. The interval 313–348 (PQAPRLPETAGEPKLPCDLNSSSCAAEEDKQSDSGD) is disordered. Over residues 339 to 348 (EEDKQSDSGD) the composition is skewed to basic and acidic residues.

It belongs to the lunapark family. As to quaternary structure, homodimer; homodimerization requires the C4-type zinc finger motif and decreases during mitosis in a phosphorylation-dependent manner. In terms of processing, phosphorylated. Phosphorylation occurs during interphase. Phosphorylation also occurs during mitosis; these phosphorylations reduce both its homodimerization and the ER three-way tubular junction formation.

The protein resides in the endoplasmic reticulum membrane. In terms of biological role, endoplasmic reticulum (ER)-shaping membrane protein that plays a role in determining ER morphology. Involved in the stabilization of nascent three-way ER tubular junctions within the ER network. May also play a role as a curvature-stabilizing protein within three-way ER tubular junction network. In Takifugu rubripes (Japanese pufferfish), this protein is Endoplasmic reticulum junction formation protein lunapark-A (lnpka).